The following is a 324-amino-acid chain: Kelch domain-containing protein AF_2170 (324 aa).

2 Kelch repeats span residues tyrosine 229–glutamate 276 and tyrosine 277–lysine 323.

The protein is Kelch domain-containing protein AF_2170 of Archaeoglobus fulgidus (strain ATCC 49558 / DSM 4304 / JCM 9628 / NBRC 100126 / VC-16).